The following is a 415-amino-acid chain: Gamma-glutamyl phosphate reductase (415 aa).

It belongs to the gamma-glutamyl phosphate reductase family.

The protein resides in the cytoplasm. The catalysed reaction is L-glutamate 5-semialdehyde + phosphate + NADP(+) = L-glutamyl 5-phosphate + NADPH + H(+). It functions in the pathway amino-acid biosynthesis; L-proline biosynthesis; L-glutamate 5-semialdehyde from L-glutamate: step 2/2. Catalyzes the NADPH-dependent reduction of L-glutamate 5-phosphate into L-glutamate 5-semialdehyde and phosphate. The product spontaneously undergoes cyclization to form 1-pyrroline-5-carboxylate. The chain is Gamma-glutamyl phosphate reductase from Thermotoga sp. (strain RQ2).